A 2211-amino-acid chain; its full sequence is Orsellinic acid synthase (2211 aa).

The N-terminal acylcarrier protein transacylase domain (SAT) stretch occupies residues 44–246; the sequence is TFREQVSDAI…TVAVVHSLYH (203 aa). Residues 380–805 enclose the Ketosynthase family 3 (KS3) domain; that stretch reads WDDIAIVGMA…GSNAAVIIGE (426 aa). Catalysis depends on for beta-ketoacyl synthase activity residues cysteine 549, histidine 684, and histidine 724. A malonyl-CoA:ACP transacylase (MAT) domain region spans residues 910–1228; sequence VFIFSGQGSQ…QLTTLKKNVP (319 aa). Residue serine 1006 is the For acyl/malonyl transferase activity of the active site. Residues 1309–1440 are N-terminal hotdog fold; the sequence is HAIQKLSHGA…GVVKQSNMAS (132 aa). Positions 1309 to 1629 constitute a PKS/mFAS DH domain; it reads HAIQKLSHGA…FQHVKIPLIE (321 aa). The product template (PT) domain stretch occupies residues 1334–1573; it reads EFIEGHLVCG…GATTLRAPVV (240 aa). Residue histidine 1339 is the Proton acceptor; for dehydratase activity of the active site. A C-terminal hotdog fold region spans residues 1473 to 1629; it reads VQVFSKRAMY…FQHVKIPLIE (157 aa). The active-site Proton donor; for dehydratase activity is aspartate 1537. Carrier domains lie at 1681 to 1755 and 1787 to 1865; these read AAPE…EALS and STVD…VKRP. An O-(pantetheine 4'-phosphoryl)serine modification is found at serine 1715. Positions 1755-1786 are disordered; the sequence is SPTPVGNDVDNDSPTPGSERGSDSAISTPASV. Residue serine 1824 is modified to O-(pantetheine 4'-phosphoryl)serine. The thioesterase (TE) domain stretch occupies residues 1937–2204; sequence SGKSPLFLIH…AAVSAALVDA (268 aa).

It carries out the reaction 3 malonyl-CoA + acetyl-CoA + 2 H(+) = orsellinate + 3 CO2 + 4 CoA. The protein operates within secondary metabolite biosynthesis. Non-reducing polyketide synthase; part of the gene cluster that mediates the biosynthesis of the bibenzoquinone oosporein, a metabolite required for fungal virulence that acts by evading host immunity to facilitate fungal multiplication in insects. The non-reducing polyketide synthase OpS1 produces orsellinic acid by condensing acetyl-CoA with 3 malonyl-CoA units. Orsellinic acid is then hydroxylated to benzenetriol by the hydroxylase OpS4. The intermediate is oxidized either nonenzymatically to 5,5'-dideoxy-oosporein or enzymatically to benzenetetrol by the oxidoreductase OpS7. The latter is further dimerized to oosporein by the catalase OpS5. OpS6 probably functions en route for protecting cells against oxidative stress by scavenging any leaked free radical form of benzenetetrol by activating the thiol group of glutathione. The polypeptide is Orsellinic acid synthase (Beauveria bassiana (strain ARSEF 2860) (White muscardine disease fungus)).